The following is a 316-amino-acid chain: Pantothenate kinase (316 aa).

95–102 (GSVAVGKS) lines the ATP pocket.

It belongs to the prokaryotic pantothenate kinase family.

It localises to the cytoplasm. The catalysed reaction is (R)-pantothenate + ATP = (R)-4'-phosphopantothenate + ADP + H(+). Its pathway is cofactor biosynthesis; coenzyme A biosynthesis; CoA from (R)-pantothenate: step 1/5. The chain is Pantothenate kinase from Salmonella gallinarum (strain 287/91 / NCTC 13346).